The chain runs to 602 residues: Exopolysaccharide phosphotransferase SCO2594 (602 aa).

A disordered region spans residues 251-271 (PRAGEDLDAGDGAAGGPRPGL).

This sequence belongs to the stealth family.

This chain is Exopolysaccharide phosphotransferase SCO2594, found in Streptomyces coelicolor (strain ATCC BAA-471 / A3(2) / M145).